The primary structure comprises 252 residues: 5'-nucleotidase SurE (252 aa).

Positions 8, 9, 39, and 95 each coordinate a divalent metal cation.

Belongs to the SurE nucleotidase family. The cofactor is a divalent metal cation.

Its subcellular location is the cytoplasm. It catalyses the reaction a ribonucleoside 5'-phosphate + H2O = a ribonucleoside + phosphate. In terms of biological role, nucleotidase that shows phosphatase activity on nucleoside 5'-monophosphates. This chain is 5'-nucleotidase SurE, found in Clostridium botulinum (strain Kyoto / Type A2).